The primary structure comprises 333 residues: Pantothenate synthetase (333 aa).

M27–H34 contacts ATP. Catalysis depends on H34, which acts as the Proton donor. Position 61 (Q61) interacts with (R)-pantoate. Beta-alanine is bound at residue Q61. An ATP-binding site is contributed by G148–D151. A (R)-pantoate-binding site is contributed by Q154. ATP is bound by residues V177 and L185–R188.

The protein belongs to the pantothenate synthetase family. In terms of assembly, homodimer.

It localises to the cytoplasm. It carries out the reaction (R)-pantoate + beta-alanine + ATP = (R)-pantothenate + AMP + diphosphate + H(+). It functions in the pathway cofactor biosynthesis; (R)-pantothenate biosynthesis; (R)-pantothenate from (R)-pantoate and beta-alanine: step 1/1. Functionally, catalyzes the condensation of pantoate with beta-alanine in an ATP-dependent reaction via a pantoyl-adenylate intermediate. In Streptomyces avermitilis (strain ATCC 31267 / DSM 46492 / JCM 5070 / NBRC 14893 / NCIMB 12804 / NRRL 8165 / MA-4680), this protein is Pantothenate synthetase.